Here is a 160-residue protein sequence, read N- to C-terminus: uncharacterized protein (160 aa).

C2H2-type zinc fingers lie at residues 10 to 32, 41 to 64, and 75 to 98; these read LSCLLCEQTFDATEKLDEHLPTH, QTCDICGRTMRSSLELHQHYKRYH, and FQCQLCDKVFLLQDHLKVHVKIEH. Position 115 is a phosphotyrosine (Tyr-115). A Phosphoserine modification is found at Ser-116.

It localises to the nucleus. In terms of biological role, may be involved in transcriptional regulation. This is an uncharacterized protein from Drosophila melanogaster (Fruit fly).